A 238-amino-acid polypeptide reads, in one-letter code: MEEAKIPMLKLGPITFNLTLLAVCIVTIAVIFAFVFWASRQMKLKPEGKQTALEYLISFVDGIGEEHLDHNLQKSYSLLLFTIFLFVAVANNLGLFTKLETVNGYNLWTSPTANLAFDLALSLFITLMVHIEGVRRRGLVAHLKRLATPWPMTPMNLLEEFTNFLSLAIRLFGNIFAGEVVTGLIVQLANYRVYWWPIAFLVNMAWTAFSVFISCIQAFVFTKLTATYLGKKVNESEE.

The next 5 membrane-spanning stretches (helical) occupy residues Leu-18–Ala-38, Tyr-76–Phe-96, Asn-114–Val-134, Ser-166–Val-186, and Val-193–Ile-213.

Belongs to the ATPase A chain family. In terms of assembly, F-type ATPases have 2 components, CF(1) - the catalytic core - and CF(0) - the membrane proton channel. CF(1) has five subunits: alpha(3), beta(3), gamma(1), delta(1), epsilon(1). CF(0) has three main subunits: a(1), b(2) and c(9-12). The alpha and beta chains form an alternating ring which encloses part of the gamma chain. CF(1) is attached to CF(0) by a central stalk formed by the gamma and epsilon chains, while a peripheral stalk is formed by the delta and b chains.

It localises to the cell membrane. In terms of biological role, key component of the proton channel; it plays a direct role in the translocation of protons across the membrane. This Streptococcus pyogenes serotype M49 (strain NZ131) protein is ATP synthase subunit a.